Consider the following 538-residue polypeptide: Syncytin-2 (538 aa).

The N-terminal stretch at 1-15 (MGLLLLLLILTPLLA) is a signal peptide. The Extracellular segment spans residues 16–478 (AYCHPDFRLL…GWLNWEGTWK (463 aa)). Positions 43-46 (CWLC) match the CXXC motif. Disulfide bonds link cysteine 43/cysteine 46, cysteine 43/cysteine 439, and cysteine 431/cysteine 438. N-linked (GlcNAc...) asparagine glycosylation is found at asparagine 146, asparagine 177, asparagine 220, asparagine 241, asparagine 247, asparagine 312, and asparagine 332. The fusion peptide stretch occupies residues 354 to 374 (LIPLLVGLGIVGSAGTGIAGI). Residues 414–430 (LQNRRGLDMLTAAQGGI) carry the CKS-17 motif. Residues 431–439 (CLALDEKCC) carry the CX6CC motif. Asparagine 443 carries an N-linked (GlcNAc...) asparagine glycan. A helical membrane pass occupies residues 479–499 (WFSWVLPFTGPLVSLLLLLLF). Residues 500-538 (GPCLLNLITQFVSSRLQATKLQMKLNKRVHPRNSQESPF) lie on the Cytoplasmic side of the membrane.

Belongs to the gamma type-C retroviral envelope protein family. HERV class-I FRD env subfamily. In terms of assembly, the surface and transmembrane proteins form a heterodimer. They are attached by non-covalent interactions or by a labile interchain disulfide bond. Post-translationally, specific enzymatic cleavages in vivo yield the mature SU and TM proteins. The CXXC motif is highly conserved across a broad range of retroviral envelope proteins. It is thought to participate in the formation of a labile disulfide bond possibly with the CX6CC motif present in the transmembrane protein.

It localises to the virion. Its subcellular location is the cell membrane. In terms of biological role, this endogenous retroviral envelope protein has retained its original fusogenic properties and participates in trophoblast fusion and the formation of a syncytium during placenta morphogenesis. The interaction with MFSD2A is apparently important for this process. Functionally, endogenous envelope proteins may have kept, lost or modified their original function during evolution but this one can still make pseudotypes with MLV, HIV-1 or SIV-1 virions and confer infectivity. Retroviral envelope proteins mediate receptor recognition and membrane fusion during early infection. The surface protein mediates receptor recognition, while the transmembrane protein anchors the envelope heterodimer to the viral membrane through one transmembrane domain. The other hydrophobic domain, called fusion peptide, mediates fusion of the viral membrane with the target cell membrane. This chain is Syncytin-2 (ERVFRD-1), found in Callithrix jacchus (White-tufted-ear marmoset).